A 1024-amino-acid chain; its full sequence is MNLFNLDRFRFEKRSKIEEAPEAAPQPSQPGPSSPISLSAEEENAEGEVSRANTPDSDVTEKTEDSSVPEPPDNESKASLSCFQNQRTIQEYIDLSSDSEDVSPNCSSTVQEKKFSKDTVIIVSEPSEDEESHDLPSATRRNDISELEDLSELEDLKDAKLQTLKELFPQRSDSDLLKLIDSTSTMDGAIAAALLKFGDAGGGPRKRKLSSSSEAYEEDEANDDQSLKKPRGDRREESNESAEASSNWEKQESIVLKLQKEFPNFDKQELREVLKEHEWMYTEALESLKVFAEDQDVQCASQSEVTNGKEVARNQNYSKNAAKIKMKQKISMKPQNGFNKKRKKNVFNPKKAVEDSEYDSGSDAGSSLDEDYSSCEEVMEDGYKGKILHFLQDASIGELTLIPKCSQKKAQKIIELRPFNNWETLFTKMSKINGLSEDLIWNCKTVIQERDVVIRLMNKCEDISNKLTKQVTMLTGNGGGWNIEQPSLLNQSLSLKPYQKVGLNWLALVHKHGLNGILADEMGLGKTIQAIAFLAYLFQEGNKGPHLIVVPASTIDNWLREVNLWCPTLNVLCYYGSQEERKQIRFNIHNKYEDYNVIVTTYNCAISSSDDRSLFRRLKLNYAIFDEGHMLKNMGSIRYQHLMTINARNRLLLTGTPVQNNLLELMSLLNFVMPHMFSSSTSEIRRMFSSKTKPADEQSIYEKERIAHAKQIIKPFILRRVKEEVLKLLPPKKDQIELCAMSEKQEQLYSGLFNRLKKSINNLEKNTEMCNVMMQLRKMANHPLLHRQYYTAEKLKEMSQLMLKEPTHCEANPDLIFEDMEVMTDFELHVLCKQYQHINSYQLDMDLILDSGKFRTLGCILSELKQKGDRVVLFSQFTMMLDILEVLLKHHQHRYLRLDGKTQISERIHLIDEFNTDMDIFVFLLSTKAGGLGINLTSANVVILHDIDCNPYNDKQAEDRCHRVGQTKEVLVIKLISQGTIEESMLKINQQKLKLEQDMTTVDEADEGSMPADIATLLKTSMGL.

At methionine 1 the chain carries N-acetylmethionine. Residues 1–83 are disordered; that stretch reads MNLFNLDRFR…NESKASLSCF (83 aa). A compositionally biased stretch (basic and acidic residues) spans 7-19; it reads DRFRFEKRSKIEE. Residue threonine 54 is modified to Phosphothreonine. The residue at position 57 (serine 57) is a Phosphoserine. Residue lysine 77 forms a Glycyl lysine isopeptide (Lys-Gly) (interchain with G-Cter in SUMO2) linkage. 6 positions are modified to phosphoserine: serine 79, serine 124, serine 127, serine 132, serine 145, and serine 151. One can recognise a CUE 1 domain in the interval 156–198; the sequence is LKDAKLQTLKELFPQRSDSDLLKLIDSTSTMDGAIAAALLKFG. Positions 201–250 are disordered; that stretch reads GGGPRKRKLSSSSEAYEEDEANDDQSLKKPRGDRREESNESAEASSNWEK. Phosphoserine occurs at positions 210 and 213. Tyrosine 216 is subject to Phosphotyrosine. Phosphoserine occurs at positions 238 and 241. In terms of domain architecture, CUE 2 spans 250–293; it reads KQESIVLKLQKEFPNFDKQELREVLKEHEWMYTEALESLKVFAE. Serine 301 is modified (phosphoserine). The interval 331-369 is disordered; the sequence is SMKPQNGFNKKRKKNVFNPKKAVEDSEYDSGSDAGSSLD. Residues lysine 333 and lysine 469 each participate in a glycyl lysine isopeptide (Lys-Gly) (interchain with G-Cter in SUMO2) cross-link. In terms of domain architecture, Helicase ATP-binding spans 507–675; that stretch reads ALVHKHGLNG…MSLLNFVMPH (169 aa). Residue 519 to 527 coordinates ATP; that stretch reads ADEMGLGKT. The DEGH box signature appears at 626–629; it reads DEGH. Positions 719–736 match the Nuclear localization signal motif; it reads RRVKEEVLKLLPPKKDQI. Lysine 722 is covalently cross-linked (Glycyl lysine isopeptide (Lys-Gly) (interchain with G-Cter in SUMO2)). The 153-residue stretch at 856–1008 folds into the Helicase C-terminal domain; it reads TLGCILSELK…MTTVDEADEG (153 aa). 895–902 provides a ligand contact to ATP; the sequence is YLRLDGKT. Lysine 994 participates in a covalent cross-link: Glycyl lysine isopeptide (Lys-Gly) (interchain with G-Cter in SUMO2). A DEAD box motif is present at residues 1003–1006; the sequence is DEAD.

It belongs to the SNF2/RAD54 helicase family. As to quaternary structure, binds to DNA preferentially in the vicinity of transcriptional start sites. Interacts with MSH2 and TRIM28. Part of a complex composed of TRIM28, HDAC1, HDAC2 and EHMT2. Interacts with PCNA.

Its subcellular location is the nucleus. The protein resides in the chromosome. The catalysed reaction is ATP + H2O = ADP + phosphate + H(+). In terms of biological role, DNA helicase that possesses intrinsic ATP-dependent nucleosome-remodeling activity and is both required for DNA repair and heterochromatin organization. Promotes DNA end resection of double-strand breaks (DSBs) following DNA damage: probably acts by weakening histone DNA interactions in nucleosomes flanking DSBs. Required for the restoration of heterochromatin organization after replication. Acts at replication sites to facilitate the maintenance of heterochromatin by directing H3 and H4 histones deacetylation, H3 'Lys-9' trimethylation (H3K9me3) and restoration of silencing. This chain is SWI/SNF-related matrix-associated actin-dependent regulator of chromatin subfamily A containing DEAD/H box 1 (Smarcad1), found in Rattus norvegicus (Rat).